The sequence spans 169 residues: Photosystem I assembly protein Ycf3 (169 aa).

3 TPR repeats span residues 36–69 (AFTY…EIDP), 73–106 (SYIL…NPFL), and 121–154 (GEQA…TPGN).

The protein belongs to the Ycf3 family.

Its subcellular location is the plastid. The protein resides in the chloroplast thylakoid membrane. Essential for the assembly of the photosystem I (PSI) complex. May act as a chaperone-like factor to guide the assembly of the PSI subunits. This is Photosystem I assembly protein Ycf3 from Cucumis sativus (Cucumber).